The following is a 340-amino-acid chain: Nicotianamine synthase 9 (340 aa).

Belongs to the nicotianamine synthase (NAS)-like family. As to quaternary structure, homotrimer.

The catalysed reaction is 3 S-adenosyl-L-methionine = nicotianamine + 3 S-methyl-5'-thioadenosine + 3 H(+). Synthesizes nicotianamine, a polyamine that is the first intermediate in the synthesis of the phytosiderophores of the mugineic acid type found in gramineae which serves as a sensor for the physiological iron status within the plant, and/or might be involved in the transport of iron. In Hordeum vulgare (Barley), this protein is Nicotianamine synthase 9 (NAS9).